The sequence spans 225 residues: Cell division protein SepF (225 aa).

The disordered stretch occupies residues 22-116 (EYLDEPEPAR…TRGALAVDTR (95 aa)). Composition is skewed to basic and acidic residues over residues 28 to 54 (EPAR…RDFA) and 77 to 86 (RYDGPRHSSR).

It belongs to the SepF family. Homodimer. Interacts with FtsZ.

Its subcellular location is the cytoplasm. Functionally, cell division protein that is part of the divisome complex and is recruited early to the Z-ring. Probably stimulates Z-ring formation, perhaps through the cross-linking of FtsZ protofilaments. Its function overlaps with FtsA. The protein is Cell division protein SepF of Rhodococcus jostii (strain RHA1).